The sequence spans 169 residues: Large ribosomal subunit protein uL10 (169 aa).

It belongs to the universal ribosomal protein uL10 family. In terms of assembly, part of the ribosomal stalk of the 50S ribosomal subunit. The N-terminus interacts with L11 and the large rRNA to form the base of the stalk. The C-terminus forms an elongated spine to which L12 dimers bind in a sequential fashion forming a multimeric L10(L12)X complex.

In terms of biological role, forms part of the ribosomal stalk, playing a central role in the interaction of the ribosome with GTP-bound translation factors. The chain is Large ribosomal subunit protein uL10 from Rickettsia bellii (strain OSU 85-389).